The chain runs to 91 residues: Protein translocase subunit SecG (91 aa).

The next 2 helical transmembrane spans lie at 16–36 (HTFL…VVLL) and 71–91 (LTII…YLGM).

This sequence belongs to the SecG family. In terms of assembly, component of the Sec protein translocase complex. Heterotrimer consisting of SecY, SecE and SecG subunits. The heterotrimers can form oligomers, although 1 heterotrimer is thought to be able to translocate proteins. Interacts with SecDF, and other proteins may be involved. The channel interacts with SecA via subunit SecY. Also part of the accessory SecA2/SecY2 protein translocation apparatus required to export cell wall protein GspB.

It is found in the cell membrane. Subunit of the protein translocation channel SecYEG. While not essential, it considerably increases the export efficiency of extracellular proteins. The protein is Protein translocase subunit SecG of Staphylococcus aureus (strain NCTC 8325 / PS 47).